Here is a 346-residue protein sequence, read N- to C-terminus: GTP-binding RHO-like protein (346 aa).

Basic residues predominate over residues 1-10 (MTPNGSRRHS). The disordered stretch occupies residues 1–25 (MTPNGSRRHSAYMGSPRSQHSSTME). The span at 16–25 (PRSQHSSTME) shows a compositional bias: polar residues. GTP is bound at residue 82-89 (GDGGCGKT). The Effector region signature appears at 104–112 (YVPTVFENY). Residues 130–134 (DTAGQ) and 188–191 (TKSD) contribute to the GTP site. The disordered stretch occupies residues 259–294 (LGGSNGGSGNHSRHHSRNYSNVSNNRRGHLKNTSYD). C343 bears the Cysteine methyl ester mark. C343 carries S-geranylgeranyl cysteine lipidation. A propeptide spans 344 to 346 (VIL) (removed in mature form).

The protein belongs to the small GTPase superfamily. Rho family.

It is found in the cell membrane. The sequence is that of GTP-binding RHO-like protein (CRL1) from Candida albicans (strain WO-1) (Yeast).